The primary structure comprises 2961 residues: Zinc finger ZZ-type and EF-hand domain-containing protein 1 (2961 aa).

Residues 1-41 are disordered; the sequence is MGNAPSHSSEDEAAAAGGEGWGPHQDWAAVSGTTPGPGVAA. Gly-2 is lipidated: N-myristoyl glycine. The region spanning 111–146 is the EF-hand domain; sequence CSSEQFEEAFAQFDAEGDGTVDAENMLEALKNSSGA. In terms of domain architecture, DOC spans 226–405; it reads LVQKEKESPG…AIWYWSLLTS (180 aa). A phosphoserine mark is found at Ser-240, Ser-1475, Ser-1488, and Ser-1509. Residues 1446-1531 form a disordered region; the sequence is TADETSHLQP…PTRRPPFTRG (86 aa). A compositionally biased stretch (polar residues) spans 1485-1502; the sequence is GDQSPGLGTQPKLPSSSG. Residue Thr-1512 is modified to Phosphothreonine. Residues 1516–1531 show a composition bias toward low complexity; that stretch reads PLSPSTPTRRPPFTRG. Ser-1518 carries the phosphoserine modification. A phosphothreonine mark is found at Thr-1521 and Thr-1523. A phosphoserine mark is found at Ser-1537 and Ser-1540. ZZ-type zinc fingers lie at residues 1778 to 1833 and 1827 to 1882; these read NVDI…FTCD and NMEF…MVTI. Zn(2+) is bound by residues Cys-1783, Cys-1786, Cys-1797, Cys-1800, Cys-1806, Cys-1809, His-1819, His-1823, Cys-1832, Cys-1835, Cys-1846, Cys-1849, Cys-1855, Cys-1858, His-1868, and His-1872. Disordered regions lie at residues 1994–2078 and 2426–2455; these read AVQG…PSPE and LELDERGDREEEVERPVSSPGDPEQKKLDP. The span at 2009–2027 shows a compositional bias: basic and acidic residues; that stretch reads AVHEEIRPVDFKQRNKADK. Positions 2033–2043 are enriched in polar residues; sequence KDPSCQTQISD. The segment covering 2426-2440 has biased composition (basic and acidic residues); sequence LELDERGDREEEVER. Position 2444 is a phosphoserine (Ser-2444). At Lys-2667 the chain carries N6-acetyllysine.

As to quaternary structure, interacts with KLF6 and KLF9. Interacts via (ZZ-type 2 zinc finger) with histone H3 trimethylated at 'Lys-4' (H3K4me3) and histone H3 acetylated at 'Lys-4' (H3K4ac). As to expression, expressed at low levels in cerebellum.

Its function is as follows. Histone H3 reader which may act as a transcriptional coactivator for KLF6 and KLF9 transcription factors. In Homo sapiens (Human), this protein is Zinc finger ZZ-type and EF-hand domain-containing protein 1.